Reading from the N-terminus, the 324-residue chain is MTKEFHAVGERSVVTTAVDAPQARHARRPAELLKAYAGLIKPRVIELLLVTTIPAMLLAARGIPSPWLVIATLVGGTMAAGSANALNCVADADIDQVMKRTRARPLVRHTVSNRHALVFGIALGAGSFGWLWATTNLLSAVLAVATILFYVFVYTLVLKRRTAQNIVWGGAAGCMPVVIGWAGVTGRVDWPALVMFGIIFFWTPPHTWSLAMKYRDDYERAGVPMLPVVARPTYVSRQIVVFTWLMVLWTLLLAPATGWLYTAFAIAAGAWFLVLAHRLHAQTRRGEPTKPLKLFHLSNTYLMIVCVALAVDSALSLPVLGWPF.

A run of 9 helical transmembrane segments spans residues 39–59, 63–83, 115–135, 137–157, 166–186, 192–212, 239–259, 260–280, and 302–322; these read LIKP…MLLA, IPSP…AGSA, HALV…WATT, LLSA…YTLV, IVWG…GVTG, ALVM…SLAM, IVVF…ATGW, LYTA…HRLH, and LMIV…VLGW.

The protein belongs to the UbiA prenyltransferase family. Protoheme IX farnesyltransferase subfamily.

The protein resides in the cell membrane. It catalyses the reaction heme b + (2E,6E)-farnesyl diphosphate + H2O = Fe(II)-heme o + diphosphate. The protein operates within porphyrin-containing compound metabolism; heme O biosynthesis; heme O from protoheme: step 1/1. Its function is as follows. Converts heme B (protoheme IX) to heme O by substitution of the vinyl group on carbon 2 of heme B porphyrin ring with a hydroxyethyl farnesyl side group. In Saccharopolyspora erythraea (strain ATCC 11635 / DSM 40517 / JCM 4748 / NBRC 13426 / NCIMB 8594 / NRRL 2338), this protein is Protoheme IX farnesyltransferase 2.